The primary structure comprises 120 residues: UPF0102 protein PTH_1707 (120 aa).

The protein belongs to the UPF0102 family.

This is UPF0102 protein PTH_1707 from Pelotomaculum thermopropionicum (strain DSM 13744 / JCM 10971 / SI).